We begin with the raw amino-acid sequence, 255 residues long: Adenosylcobinamide-GDP ribazoletransferase (255 aa).

A run of 7 helical transmembrane segments spans residues 33–53, 57–77, 107–127, 136–156, 174–194, 196–216, and 234–254; these read IFLPAYGLVTGGILALIIELF, FPGFFWAGVIIAGQIYLSGAL, VGSMAVAFFGAFLILKYGSYA, FTVLISEIILRGTGYLVIYSF, AGLIFTLGQTLIFTLGAAAFF, FSLIKILIILLLAYLFAFVVA, and IMELTGLFVPVAVLLINNIGV.

It belongs to the CobS family. Requires Mg(2+) as cofactor.

Its subcellular location is the cell membrane. It carries out the reaction alpha-ribazole + adenosylcob(III)inamide-GDP = adenosylcob(III)alamin + GMP + H(+). The catalysed reaction is alpha-ribazole 5'-phosphate + adenosylcob(III)inamide-GDP = adenosylcob(III)alamin 5'-phosphate + GMP + H(+). It functions in the pathway cofactor biosynthesis; adenosylcobalamin biosynthesis; adenosylcobalamin from cob(II)yrinate a,c-diamide: step 7/7. Functionally, joins adenosylcobinamide-GDP and alpha-ribazole to generate adenosylcobalamin (Ado-cobalamin). Also synthesizes adenosylcobalamin 5'-phosphate from adenosylcobinamide-GDP and alpha-ribazole 5'-phosphate. This Carboxydothermus hydrogenoformans (strain ATCC BAA-161 / DSM 6008 / Z-2901) protein is Adenosylcobinamide-GDP ribazoletransferase.